A 388-amino-acid polypeptide reads, in one-letter code: Probable peptidoglycan glycosyltransferase FtsW (388 aa).

The Cytoplasmic portion of the chain corresponds to 1-19 (MMSPSTSAPHNQPIQPELD). The helical transmembrane segment at 20 to 40 (VLLVSTVLLLLGLGLVMVYSA) threads the bilayer. Topologically, residues 41–55 (SIAIAEAKFGEGSSY) are periplasmic. The chain crosses the membrane as a helical span at residues 56 to 76 (YFLARQASYILAGIAVGIGCF). The Cytoplasmic portion of the chain corresponds to 77–89 (RIPLRWWQAYSHY). Residues 90 to 110 (LLGLGILLLLVVLIPGISHEI) traverse the membrane as a helical segment. Residues 111 to 116 (NGSRRW) lie on the Periplasmic side of the membrane. A helical membrane pass occupies residues 117–137 (IPLGITSFQPSELMKLIILIF). The Cytoplasmic portion of the chain corresponds to 138 to 151 (TADYVVRKAAFKDH). A helical membrane pass occupies residues 152–172 (FFKGFLPILALLTIVSLLLLM). The Periplasmic portion of the chain corresponds to 173 to 175 (EPD). The next 2 membrane-spanning stretches (helical) occupy residues 176-196 (LGATVVIAAIVLSIMFMNGMS) and 197-217 (LKMFFGLICLVPVLLALLIII). The Periplasmic segment spans residues 218-284 (EPYRMDRINA…DFMFAVLAEE (67 aa)). The chain crosses the membrane as a helical span at residues 285–305 (LGFAGVVTVISLFFFLLVRIF). Residues 306 to 324 (KVGRTAARLGDQFGSLVAQ) are Cytoplasmic-facing. A helical membrane pass occupies residues 325 to 345 (GIGVWLGLQAFINMGVNMGLL). Over 346-351 (PTKGLT) the chain is Periplasmic. Residues 352–372 (LPFMSYGGSSIVINSIAIAIL) form a helical membrane-spanning segment. The Cytoplasmic portion of the chain corresponds to 373 to 388 (LRIDWENRLKRRGLNA).

Belongs to the SEDS family. FtsW subfamily.

The protein resides in the cell inner membrane. The catalysed reaction is [GlcNAc-(1-&gt;4)-Mur2Ac(oyl-L-Ala-gamma-D-Glu-L-Lys-D-Ala-D-Ala)](n)-di-trans,octa-cis-undecaprenyl diphosphate + beta-D-GlcNAc-(1-&gt;4)-Mur2Ac(oyl-L-Ala-gamma-D-Glu-L-Lys-D-Ala-D-Ala)-di-trans,octa-cis-undecaprenyl diphosphate = [GlcNAc-(1-&gt;4)-Mur2Ac(oyl-L-Ala-gamma-D-Glu-L-Lys-D-Ala-D-Ala)](n+1)-di-trans,octa-cis-undecaprenyl diphosphate + di-trans,octa-cis-undecaprenyl diphosphate + H(+). It functions in the pathway cell wall biogenesis; peptidoglycan biosynthesis. In terms of biological role, peptidoglycan polymerase that is essential for cell division. This Nitrosomonas europaea (strain ATCC 19718 / CIP 103999 / KCTC 2705 / NBRC 14298) protein is Probable peptidoglycan glycosyltransferase FtsW.